Here is an 849-residue protein sequence, read N- to C-terminus: Probable receptor-like protein kinase At1g30570 (849 aa).

Residues 1–28 (MSKLRKKYLEHLLCVLIFFTYVIGYGEA) form the signal peptide. Over 29-429 (QSKSFLVDCG…GHSVSDSKMR (401 aa)) the chain is Extracellular. N-linked (GlcNAc...) asparagine glycans are attached at residues asparagine 40, asparagine 57, asparagine 94, asparagine 122, asparagine 158, asparagine 268, asparagine 271, asparagine 305, and asparagine 343. Residues 430-450 (IIWISVGAGIAIIIFFVFLGI) traverse the membrane as a helical segment. The Cytoplasmic segment spans residues 451-849 (LVVCLCKKRR…QTGSALHNSA (399 aa)). One can recognise a Protein kinase domain in the interval 520 to 793 (FDDGLAIGVG…GEVLWSLEYV (274 aa)). ATP-binding positions include 526 to 534 (IGVGGFGKV) and lysine 548. The Proton acceptor role is filled by aspartate 644. Positions 810 to 849 (FSSSQAVEEAPESFTLPACSNQDSSETEQSQTGSALHNSA) are disordered. Residues 827-849 (ACSNQDSSETEQSQTGSALHNSA) are compositionally biased toward polar residues.

The protein belongs to the protein kinase superfamily. Ser/Thr protein kinase family.

The protein resides in the cell membrane. The sequence is that of Probable receptor-like protein kinase At1g30570 from Arabidopsis thaliana (Mouse-ear cress).